The following is a 145-amino-acid chain: D-aminoacyl-tRNA deacylase (145 aa).

Residues 137 to 138 (GP) carry the Gly-cisPro motif, important for rejection of L-amino acids motif.

The protein belongs to the DTD family. In terms of assembly, homodimer.

It localises to the cytoplasm. It carries out the reaction glycyl-tRNA(Ala) + H2O = tRNA(Ala) + glycine + H(+). The enzyme catalyses a D-aminoacyl-tRNA + H2O = a tRNA + a D-alpha-amino acid + H(+). In terms of biological role, an aminoacyl-tRNA editing enzyme that deacylates mischarged D-aminoacyl-tRNAs. Also deacylates mischarged glycyl-tRNA(Ala), protecting cells against glycine mischarging by AlaRS. Acts via tRNA-based rather than protein-based catalysis; rejects L-amino acids rather than detecting D-amino acids in the active site. By recycling D-aminoacyl-tRNA to D-amino acids and free tRNA molecules, this enzyme counteracts the toxicity associated with the formation of D-aminoacyl-tRNA entities in vivo and helps enforce protein L-homochirality. In Dichelobacter nodosus (strain VCS1703A), this protein is D-aminoacyl-tRNA deacylase.